Here is a 1098-residue protein sequence, read N- to C-terminus: WD repeat-containing protein 72 (1098 aa).

WD repeat units lie at residues 15 to 54 (APPH…KISA), 60 to 102 (GHSA…CVEK), 158 to 196 (WINC…NSIQ), 315 to 359 (ENKN…VSKF), 399 to 438 (AGTA…KARL), 456 to 501 (GHHQ…ILHK), 504 to 549 (LEAG…CLLR), and 552 to 591 (KHLF…LERH). Phosphoserine is present on residues Ser-1077 and Ser-1079.

The protein resides in the cytoplasmic vesicle. Functionally, plays a major role in formation of tooth enamel. Specifically required during the maturation phase of amelogenesis for normal formation of the enamel matrix and clearance of enamel proteins. May be involved in localization of the calcium transporter SLC24A4 to the ameloblast cell membrane. This is WD repeat-containing protein 72 (WDR72) from Pongo abelii (Sumatran orangutan).